Here is a 599-residue protein sequence, read N- to C-terminus: Elongation factor 4 (599 aa).

The region spanning 4 to 186 (EHIRNFSIIA…EIVKKIPPPK (183 aa)) is the tr-type G domain. Residues 16–21 (DHGKST) and 133–136 (NKID) contribute to the GTP site.

Belongs to the TRAFAC class translation factor GTPase superfamily. Classic translation factor GTPase family. LepA subfamily.

It is found in the cell inner membrane. The enzyme catalyses GTP + H2O = GDP + phosphate + H(+). Required for accurate and efficient protein synthesis under certain stress conditions. May act as a fidelity factor of the translation reaction, by catalyzing a one-codon backward translocation of tRNAs on improperly translocated ribosomes. Back-translocation proceeds from a post-translocation (POST) complex to a pre-translocation (PRE) complex, thus giving elongation factor G a second chance to translocate the tRNAs correctly. Binds to ribosomes in a GTP-dependent manner. This is Elongation factor 4 from Citrifermentans bemidjiense (strain ATCC BAA-1014 / DSM 16622 / JCM 12645 / Bem) (Geobacter bemidjiensis).